A 578-amino-acid polypeptide reads, in one-letter code: NADPH oxidase 4 (578 aa).

Residues 1–16 (MAVSWRSWLANEGVKH) lie on the Cytoplasmic side of the membrane. The chain crosses the membrane as a helical span at residues 17 to 37 (LCLFIWLSMNVLLFWKTFLLY). The Extracellular segment spans residues 38-62 (NQGPEYHYLHQMLGLGLCLSRASAS). Residues 58–303 (RASASVLNLN…YCAERLYRYI (246 aa)) form the Ferric oxidoreductase domain. Residues 63–83 (VLNLNCSLILLPMCRTLLAYL) traverse the membrane as a helical segment. Over 84–103 (RGSQKVPSRRTRRLLDKSRT) the chain is Cytoplasmic. The chain crosses the membrane as a helical span at residues 104 to 124 (FHITCGVTICIFSGVHVAAHL). Over 125-154 (VNALNFSVNYSEDFVELNAARYRDEDPRKL) the chain is Extracellular. Asn133 is a glycosylation site (N-linked (GlcNAc...) asparagine). Residues 155 to 175 (LFTTVPGLTGVCMVVVLFLMI) traverse the membrane as a helical segment. The Cytoplasmic segment spans residues 176-188 (TASTYAIRVSNYD). The chain crosses the membrane as a helical span at residues 189 to 209 (IFWYTHNLFFVFYMLLTLHVS). Residues 210–424 (GGLLKYQTNL…SPFEESLNYE (215 aa)) are Extracellular-facing. Residues 218–273 (NLDTHPPGCISLNRTSSQNISLPEYFSEHFHEPFPEGFSKPAEFTQHKFVKICMEE) are E-loop; essential for H2O2 generating catalytic activity. N-linked (GlcNAc...) asparagine glycosylation is present at Asn230. Residues 248–575 (HEPFPEGFSK…YGTRFEYNKE (328 aa)) are mediates interaction with TLR4. Residues 304–419 (RSNKPVTIIS…DGPFGSPFEE (116 aa)) form the FAD-binding FR-type domain. Residues 425–445 (VSLCVAGGIGVTPFASILNTL) traverse the membrane as a helical segment. Topologically, residues 446–578 (LDDWKPYKLR…RFEYNKESFS (133 aa)) are cytoplasmic.

In terms of assembly, interacts with protein disulfide isomerase. Interacts with, relocalizes and stabilizes CYBA/p22phox. Interacts with TLR4. Interacts with PPP1R15A. Interacts with LRRC8A; this interaction prevents the ubiquitin-mediated degradation of LRRC8A. Heme is required as a cofactor. Deubiquitinated by USP19. In terms of processing, N-glycosylated and glycosylation is required for its proper function. Post-translationally, N-glycosylated. In terms of tissue distribution, expressed by distal tubular cells in kidney cortex and in endothelial cells (at protein level). Widely expressed. Strongly expressed in kidney and to a lower extent in heart, adipocytes, hepatoma, endothelial cells, skeletal muscle, brain, several brain tumor cell lines and airway epithelial cells.

It is found in the cytoplasm. Its subcellular location is the endoplasmic reticulum membrane. The protein localises to the cell membrane. It localises to the cell junction. The protein resides in the focal adhesion. It is found in the nucleus. Its subcellular location is the nucleolus. The protein localises to the perinuclear region. The enzyme catalyses NADPH + 2 O2 = 2 superoxide + NADP(+) + H(+). It carries out the reaction NADPH + O2 + H(+) = H2O2 + NADP(+). With respect to regulation, inhibited by plumbagin. Activated by phorbol 12-myristate 13-acetate (PMA). Activated by insulin. Inhibited by diphenylene iodonium. NADPH oxidase that catalyzes predominantly the reduction of oxygen to H2O2. Can also catalyze to a smaller extent, the reduction of oxygen to superoxide. May function as an oxygen sensor regulating the KCNK3/TASK-1 potassium channel and HIF1A activity. May regulate insulin signaling cascade. May play a role in apoptosis, bone resorption and lipolysaccharide-mediated activation of NFKB. May produce superoxide in the nucleus and play a role in regulating gene expression upon cell stimulation. Promotes ferroptosis, reactive oxygen species production and reduced glutathione (GSH) levels by activating NLRP3 inflammasome activation and cytokine release. Functionally, NADPH oxidase that catalyzes the generation of superoxide from molecular oxygen utilizing NADPH as an electron donor. Involved in redox signaling in vascular cells. Modulates the nuclear activation of ERK1/2 and the ELK1 transcription factor, and is capable of inducing nuclear DNA damage. Its function is as follows. Lacks superoxide-generating NADPH oxidase activity. In Homo sapiens (Human), this protein is NADPH oxidase 4 (NOX4).